The primary structure comprises 293 residues: 33 kDa chaperonin (293 aa).

2 disulfides stabilise this stretch: cysteine 236/cysteine 238 and cysteine 269/cysteine 272.

This sequence belongs to the HSP33 family. In terms of processing, under oxidizing conditions two disulfide bonds are formed involving the reactive cysteines. Under reducing conditions zinc is bound to the reactive cysteines and the protein is inactive.

The protein localises to the cytoplasm. Its function is as follows. Redox regulated molecular chaperone. Protects both thermally unfolding and oxidatively damaged proteins from irreversible aggregation. Plays an important role in the bacterial defense system toward oxidative stress. The chain is 33 kDa chaperonin from Lactobacillus delbrueckii subsp. bulgaricus (strain ATCC 11842 / DSM 20081 / BCRC 10696 / JCM 1002 / NBRC 13953 / NCIMB 11778 / NCTC 12712 / WDCM 00102 / Lb 14).